The following is a 101-amino-acid chain: Peroxisomal biogenesis factor 39 (101 aa).

It is found in the peroxisome. Functionally, may be a peroxin involved in the PTS2-mediated protein import pathway. The chain is Peroxisomal biogenesis factor 39 from Homo sapiens (Human).